The sequence spans 1621 residues: Lysophospholipase NTE1 (1621 aa).

At Met1–Gly12 the chain is on the cytoplasmic side. The helical transmembrane segment at Asn13 to Val33 threads the bilayer. Over Lys34–Ser59 the chain is Lumenal. Residues Leu60–Ile80 form a helical membrane-spanning segment. Residues Arg81–Ile1621 are Cytoplasmic-facing. 7 disordered regions span residues Pro188–Ser209, Glu250–Arg379, Gln545–Thr566, Trp648–Asp667, Val711–Arg735, Asp772–Gly791, and Phe839–Phe870. Composition is skewed to low complexity over residues Thr195–Ser209 and Arg348–Ser361. Residues Gly788–Ser907 and Arg951–Arg1070 each bind a nucleoside 3',5'-cyclic phosphate. Polar residues predominate over residues Phe839 to Glu867. The PNPLA domain occupies Leu1316 to Arg1480. The GXGXXG signature appears at Gly1320–Gly1325. A GXSXG motif is present at residues Gly1347 to Gly1351. Ser1349 functions as the Nucleophile in the catalytic mechanism. Catalysis depends on Asp1467, which acts as the Proton acceptor. Residues Asp1467–Gly1469 carry the DGA/G motif.

Belongs to the NTE family.

Its subcellular location is the endoplasmic reticulum membrane. It catalyses the reaction a 1-acyl-sn-glycero-3-phosphocholine + H2O = sn-glycerol 3-phosphocholine + a fatty acid + H(+). Inhibited by organophosphorus esters. In terms of biological role, intracellular phospholipase B that catalyzes the double deacylation of phosphatidylcholine (PC) to glycerophosphocholine (GroPCho). Plays an important role in membrane lipid homeostasis. Responsible for the rapid PC turnover in response to inositol, elevated temperatures, or when choline is present in the growth medium. The polypeptide is Lysophospholipase NTE1 (NTE1) (Cryptococcus neoformans var. neoformans serotype D (strain B-3501A) (Filobasidiella neoformans)).